The following is a 236-amino-acid chain: Small ribosomal subunit protein uS2c (236 aa).

It belongs to the universal ribosomal protein uS2 family.

Its subcellular location is the plastid. It is found in the chloroplast. In Saccharum hybrid (Sugarcane), this protein is Small ribosomal subunit protein uS2c (rps2).